A 208-amino-acid polypeptide reads, in one-letter code: Thymidylate kinase (208 aa).

7–14 (GIDGAGKT) is a binding site for ATP.

This sequence belongs to the thymidylate kinase family.

The enzyme catalyses dTMP + ATP = dTDP + ADP. Phosphorylation of dTMP to form dTDP in both de novo and salvage pathways of dTTP synthesis. This is Thymidylate kinase from Xylella fastidiosa (strain Temecula1 / ATCC 700964).